Consider the following 1792-residue polypeptide: BTB/POZ domain-containing protein 8 (1792 aa).

BTB domains follow at residues 58–127 (TDVT…NIKN) and 206–273 (PDID…DIPD). Disordered regions lie at residues 528 to 554 (DKGD…SDSG), 581 to 658 (SDGL…PRQV), 670 to 692 (TGQK…SGAR), 707 to 768 (KPLK…CDSP), 788 to 815 (SRPV…NNSV), 831 to 989 (AILK…KPHK), 1151 to 1283 (ERTN…SNDR), and 1519 to 1607 (SIDS…KSLD). 2 stretches are compositionally biased toward polar residues: residues 541–552 (FSSSQQRKQVSD) and 588–601 (GHSS…INKT). Composition is skewed to basic and acidic residues over residues 602-625 (LKQD…ELKT) and 640-650 (SKTENGDKARL). The segment covering 724–740 (GPSSRSTDSSMEFSIST) has biased composition (polar residues). The segment covering 744–758 (DEPKENGSTEEEKPS) has biased composition (basic and acidic residues). Residues 838–865 (TSNGCTAAQQRTKSTPSNLTKTQGSQGE) are compositionally biased toward polar residues. Positions 866–877 (SPNSVKSSVSSR) are enriched in low complexity. 2 stretches are compositionally biased toward basic and acidic residues: residues 878–891 (QSDE…HNTT) and 927–939 (KKGE…DSKQ). Residues 947-956 (ISKTQPSSQR) are compositionally biased toward polar residues. Positions 969-987 (MFHDVRDNNNKDSVSEQKP) are enriched in basic and acidic residues. Composition is skewed to polar residues over residues 1151-1160 (ERTNGTLNSA) and 1195-1215 (SDVS…PKNM). A compositionally biased stretch (low complexity) spans 1250–1259 (SDTGSATTSS). A compositionally biased stretch (basic and acidic residues) spans 1566–1594 (IQQRSKFLDSDVKSQERPCHLDLHQREPN). A compositionally biased stretch (polar residues) spans 1597-1607 (IPKNSSTKSLD).

In terms of assembly, interacts (via N-terminus) with adapter protein complex AP-2 subunits alpha (AP2A1) and beta (AP2B1). In terms of tissue distribution, highly expressed in fetal brain. Weakly expressed in adult brain and prostate.

The protein resides in the cell projection. It localises to the axon. It is found in the presynapse. Its subcellular location is the cytoplasmic vesicle. The protein localises to the clathrin-coated vesicle. The protein resides in the nucleus. In terms of biological role, involved in clathrin-mediated endocytosis at the synapse. Plays a role in neuronal development and in synaptic vesicle recycling in mature neurons, a process required for normal synaptic transmission. The protein is BTB/POZ domain-containing protein 8 of Homo sapiens (Human).